We begin with the raw amino-acid sequence, 201 residues long: Arachin 25 kDa protein (201 aa).

In terms of assembly, this is one of six apparently different protein chains that constitute the peanut protein arachin.

This chain is Arachin 25 kDa protein, found in Arachis hypogaea (Peanut).